A 492-amino-acid polypeptide reads, in one-letter code: Trypanothione reductase (492 aa).

36-52 (DVQMVHGPPFFSALGGT) is an FAD binding site. The cysteines at positions 53 and 58 are disulfide-linked. His461 (proton acceptor) is an active-site residue.

Belongs to the class-I pyridine nucleotide-disulfide oxidoreductase family. As to quaternary structure, homodimer. FAD is required as a cofactor.

The protein resides in the cytoplasm. It carries out the reaction trypanothione + NADP(+) = trypanothione disulfide + NADPH + H(+). Trypanothione is the parasite analog of glutathione; this enzyme is the equivalent of glutathione reductase. The chain is Trypanothione reductase (TPR) from Trypanosoma cruzi.